A 418-amino-acid chain; its full sequence is Mitochondrial outer membrane protein SLC25A46 (418 aa).

Residues Met1–Ala30 are disordered. A Phosphoserine modification is found at Ser32. Positions Thr44–Ser93 are disordered. Thr45 carries the phosphothreonine modification. One copy of the Solcar 1 repeat lies at Gln96–Pro187. Helical transmembrane passes span Phe103–Leu123, Phe167–Pro187, His202–Ile222, Leu258–Ile278, Phe314–Leu334, and Val382–Val402. Residues Asp311–Leu413 form a Solcar 2 repeat.

Belongs to the mitochondrial carrier (TC 2.A.29) family. Associates with the mitochondrial contact site and cristae organizing system (MICOS) complex. May associate with the endoplasmic reticulum membrane protein complex (EMC).

It is found in the mitochondrion outer membrane. Transmembrane protein of the mitochondrial outer membrane that controls mitochondrial organization. May regulate the assembly of the MICOS (mitochondrial contact site and cristae organizing system) complex which is essential to the biogenesis and dynamics of mitochondrial cristae, the inwards folds of the inner mitochondrial membrane. Through its interaction with the EMC (endoplasmic reticulum membrane protein complex), could regulate mitochondrial lipid homeostasis and thereby mitochondrial fission. This chain is Mitochondrial outer membrane protein SLC25A46, found in Homo sapiens (Human).